The chain runs to 309 residues: Formate-nitrite transporter (309 aa).

The Cytoplasmic segment spans residues 1–19 (MPPNNSKYVLDPVSIKSVC). The segment at residues 20–35 (GGEESYIRCVEYGKKK) is an intramembrane region (helical). At 36-40 (AHYSN) the chain is on the cytoplasmic side. A helical transmembrane segment spans residues 41–68 (LNLLAKAILAGMFVGLCAHASGIAGGLF). The Extracellular segment spans residues 69–79 (YYHKLREIVGA). The helical transmembrane segment at 80–100 (SMSVFVYGFTFPIAFMCIICT) threads the bilayer. The Cytoplasmic segment spans residues 101–122 (GSDLFTGNTLAVTMALYEKKVK). Residues 123–150 (LLDYLRVMTISLFGNYVGAVSFAFFVSY) traverse the membrane as a helical segment. Residues 151 to 163 (LSGAFTNVHAVEK) are Extracellular-facing. The segment at residues 164–179 (NHFFQFLNDIAEKKVH) is an intramembrane region (helical). The Extracellular segment spans residues 180–181 (HT). A helical transmembrane segment spans residues 182 to 206 (FVECVSLAVGCNIFVCLAVYFVLTL). The Cytoplasmic portion of the chain corresponds to 207–209 (KDG). Residues 210 to 226 (AGYVFSVFFAVYAFAIA) form a helical membrane-spanning segment. The Extracellular segment spans residues 227 to 249 (GYEHIIANIYTLNIALMVNTKIT). The chain crosses the membrane as a helical span at residues 250–280 (VYQAYIKNLLPTLLGNYIAGAIVLGLPLYFI). Residues 281-309 (YKEHYYNFERSKRDNNDAQMKSLSIELRN) lie on the Cytoplasmic side of the membrane.

The protein belongs to the FNT transporter (TC 1.A.16) family. Homopentamer.

It is found in the cell membrane. The protein resides in the vacuole membrane. The catalysed reaction is (S)-lactate(in) + H(+)(in) = (S)-lactate(out) + H(+)(out). The enzyme catalyses formate(in) + H(+)(in) = formate(out) + H(+)(out). It carries out the reaction pyruvate(out) + H(+)(out) = pyruvate(in) + H(+)(in). It catalyses the reaction acetate(out) + H(+)(out) = acetate(in) + H(+)(in). Its activity is regulated as follows. Inhibited by diethylpyrocarbonate (DEPC). Protonophores, such as 2,4-dinitrophenol and carbonylcyanide-3-chlorophenylhydrazone, abolish transport. Inhibited by phloretin, furosemide, alpha-cyano-4-hydroxy-cinnamate and alpha-fluorocinnamate. Inhibited by the Malaria Box compound MMV007839 and its derivatives BH296 and BH267.meta. Inhibited by the Malaria Box compound MMV000972. Inhibited by broad-specificity anion transport inhibitor NPPB. Its function is as follows. Monocarboxylate-proton symporter that mediates the efflux of the waste product lactate in the intraerythrocytic parasites; active in acidic-to-neutral pH range. Transports L-lactate. Transports D-lactate, pyruvate, acetate and formate. Essential for asexual growth but dispensable for the development of gametocytes. The polypeptide is Formate-nitrite transporter (Plasmodium falciparum (isolate 3D7)).